The chain runs to 571 residues: Peptide-N4-(N-acetyl-beta-glucosaminyl)asparagine amidase A (571 aa).

Asn121, Asn143, Asn197, Asn241, Asn318, Asn367, Asn390, Asn423, Asn457, Asn481, Asn524, and Asn529 each carry an N-linked (GlcNAc...) asparagine glycan.

In terms of assembly, heterodimer of a large and a small chain. Post-translationally, is highly glycosylated and is largly resistant against self-deglycosylation.

It carries out the reaction Hydrolysis of an N(4)-(acetyl-beta-D-glucosaminyl)asparagine residue in which the glucosamine residue may be further glycosylated, to yield a (substituted) N-acetyl-beta-D-glucosaminylamine and a peptide containing an aspartate residue.. The protein is Peptide-N4-(N-acetyl-beta-glucosaminyl)asparagine amidase A of Prunus dulcis (Almond).